Here is a 375-residue protein sequence, read N- to C-terminus: Succinyl-diaminopimelate desuccinylase (375 aa).

H66 serves as a coordination point for Zn(2+). Residue D68 is part of the active site. D99 serves as a coordination point for Zn(2+). E133 acts as the Proton acceptor in catalysis. The Zn(2+) site is built by E134, E162, and H348.

Belongs to the peptidase M20A family. DapE subfamily. In terms of assembly, homodimer. It depends on Zn(2+) as a cofactor. The cofactor is Co(2+).

It catalyses the reaction N-succinyl-(2S,6S)-2,6-diaminopimelate + H2O = (2S,6S)-2,6-diaminopimelate + succinate. It functions in the pathway amino-acid biosynthesis; L-lysine biosynthesis via DAP pathway; LL-2,6-diaminopimelate from (S)-tetrahydrodipicolinate (succinylase route): step 3/3. In terms of biological role, catalyzes the hydrolysis of N-succinyl-L,L-diaminopimelic acid (SDAP), forming succinate and LL-2,6-diaminopimelate (DAP), an intermediate involved in the bacterial biosynthesis of lysine and meso-diaminopimelic acid, an essential component of bacterial cell walls. This Serratia proteamaculans (strain 568) protein is Succinyl-diaminopimelate desuccinylase.